Here is a 245-residue protein sequence, read N- to C-terminus: Transcription factor FUP7 (245 aa).

A DNA-binding region (zn(2)-C6 fungal-type) is located at residues 10 to 37 (CKTCRSRKQKCDGIRPACSRCRSLGLQC). A disordered region spans residues 162–216 (ESSSGNADYQHEDEVQSPAGAGDDMAVGDPYRDDSVDQDSIGQPPQRTESVGNMQ). Polar residues predominate over residues 199–214 (QDSIGQPPQRTESVGN).

Its subcellular location is the nucleus. Its function is as follows. Transcription factor; part of the gene cluster that mediates the biosynthesis of the mycotoxin fusaproliferin (FUP) that belongs to the class of bicyclic sesterterpenoids. The polypeptide is Transcription factor FUP7 (Fusarium proliferatum (strain ET1) (Orchid endophyte fungus)).